We begin with the raw amino-acid sequence, 116 residues long: NADH-ubiquinone oxidoreductase chain 3 (116 aa).

3 helical membrane passes run 8–28, 56–76, and 87–107; these read VAAT…LPSL, FFLV…LLPL, and ISLL…IYEW.

The protein belongs to the complex I subunit 3 family.

The protein localises to the mitochondrion membrane. The enzyme catalyses a ubiquinone + NADH + 5 H(+)(in) = a ubiquinol + NAD(+) + 4 H(+)(out). Functionally, core subunit of the mitochondrial membrane respiratory chain NADH dehydrogenase (Complex I) that is believed to belong to the minimal assembly required for catalysis. Complex I functions in the transfer of electrons from NADH to the respiratory chain. The immediate electron acceptor for the enzyme is believed to be ubiquinone. The chain is NADH-ubiquinone oxidoreductase chain 3 (MT-ND3) from Squalus acanthias (Spiny dogfish).